A 103-amino-acid polypeptide reads, in one-letter code: Salivary thrombin inhibitor anophelin (103 aa).

Residues methionine 1 to serine 21 form the signal peptide. The interval glutamine 24–glutamate 103 is disordered. A blocks exosite I of host thrombin region spans residues glutamate 56–aspartate 68. Positions aspartate 74 to arginine 77 are blocks active site cleft of host thrombin in a reverse direction compared to substrates. The segment covering alanine 91 to glutamate 103 has biased composition (low complexity).

Belongs to the anophelin family. In terms of assembly, interacts with human F2 (thrombin); the interaction results in thrombin inhibition. As to expression, female salivary gland (at protein level). Not detected in female midgut, head, carcass and male tissues (at protein level).

Its subcellular location is the secreted. Increasing concentration of NaCl decreases affinity for thrombin. Its function is as follows. Salivary protein with anticoagulant activity that inhibits host thrombin (F2); binds to the proteinase in a reverse orientation (opposite to substrates). The sequence is that of Salivary thrombin inhibitor anophelin from Anopheles gambiae (African malaria mosquito).